The chain runs to 412 residues: cAMP-dependent protein kinase regulatory subunit (412 aa).

The segment at 1–142 (MSFEEVYEEL…RLKRSVAGNF (142 aa)) is dimerization and phosphorylation. Positions 101–105 (RRQSV) match the Pseudophosphorylation motif motif. Position 104 is a phosphoserine (serine 104). 3',5'-cyclic AMP-binding positions include 143–277 (LFKN…EEVP), glutamate 224, arginine 233, 278–412 (ILSS…STKA), glutamate 344, and arginine 353. The disordered stretch occupies residues 392–412 (MGMDNEYGDQSLHRSPPSTKA).

This sequence belongs to the cAMP-dependent kinase regulatory chain family. Tetramer, composed of 2 regulatory (R) and 2 catalytic (C) subunits. In the presence of cAMP it dissociates into 2 active monomeric C subunits and an R dimer.

This chain is cAMP-dependent protein kinase regulatory subunit (cgs1), found in Schizosaccharomyces pombe (strain 972 / ATCC 24843) (Fission yeast).